The primary structure comprises 168 residues: tRNA (cytidine(56)-2'-O)-methyltransferase (168 aa).

S-adenosyl-L-methionine-binding positions include Leu-79 and 104–108 (GAEKV).

It belongs to the aTrm56 family. As to quaternary structure, homodimer.

It localises to the cytoplasm. It carries out the reaction cytidine(56) in tRNA + S-adenosyl-L-methionine = 2'-O-methylcytidine(56) in tRNA + S-adenosyl-L-homocysteine + H(+). Functionally, specifically catalyzes the AdoMet-dependent 2'-O-ribose methylation of cytidine at position 56 in tRNAs. This chain is tRNA (cytidine(56)-2'-O)-methyltransferase, found in Archaeoglobus fulgidus (strain ATCC 49558 / DSM 4304 / JCM 9628 / NBRC 100126 / VC-16).